The chain runs to 90 residues: Probable small nuclear ribonucleoprotein E (90 aa).

One can recognise a Sm domain in the interval 14-89 (VNLIFRYLQN…ITLIHAAQQE (76 aa)).

It belongs to the snRNP Sm proteins family. In terms of assembly, core component of the spliceosomal U1, U2, U4 and U5 small nuclear ribonucleoproteins (snRNPs), the building blocks of the spliceosome.

Its subcellular location is the nucleus. The protein resides in the cytoplasm. The protein localises to the cytosol. Functionally, plays a role in pre-mRNA splicing as a core component of the spliceosomal U1, U2, U4 and U5 small nuclear ribonucleoproteins (snRNPs), the building blocks of the spliceosome. This chain is Probable small nuclear ribonucleoprotein E (snr-6), found in Caenorhabditis elegans.